Here is a 368-residue protein sequence, read N- to C-terminus: MKRVGLIGWRGMVGSVLMQRMLEERDFDLIEPVFFTTSSVGGQGAIGKETVPLKDAYSIEELKSLDAIITCQGGDYTSEVFPKLRDAGWQGYWIDAASSLRMADDAVIVLDPVNRRVIDQSLDAGVKNYIGGNCTVSLMLMALGRLRGRPGRLDERHDLSGRFRAGAQNMRELIRQMGTINAAVAAEPADPASAILEIDRKGPETQRSAEFPVDHFGVPLAGSLIPYIDKELPNGQSREEWKGQAETNKILGRIKNPIPVDGICVRVGAMRCHSQALTIKLNKDVPIADIEGLISQHNPWVKLVPNHREASMQELSPAAITGTLTVPVGRLRKLNMGSQYLGAFTVGDQLLWGAAEPVRRMLLILLER.

NADP(+)-binding positions include 10–13 (RGMV), 37–38 (TS), and Gln72. Arg101 is a phosphate binding site. Cys134 acts as the Acyl-thioester intermediate in catalysis. NADP(+)-binding positions include 160–161 (SG) and Pro191. A substrate-binding site is contributed by Glu239. Residue Lys242 coordinates phosphate. Arg266 provides a ligand contact to substrate. His273 acts as the Proton acceptor in catalysis. Residue Gln349 coordinates NADP(+).

Belongs to the aspartate-semialdehyde dehydrogenase family. Homodimer.

The catalysed reaction is L-aspartate 4-semialdehyde + phosphate + NADP(+) = 4-phospho-L-aspartate + NADPH + H(+). Its pathway is amino-acid biosynthesis; L-lysine biosynthesis via DAP pathway; (S)-tetrahydrodipicolinate from L-aspartate: step 2/4. It participates in amino-acid biosynthesis; L-methionine biosynthesis via de novo pathway; L-homoserine from L-aspartate: step 2/3. The protein operates within amino-acid biosynthesis; L-threonine biosynthesis; L-threonine from L-aspartate: step 2/5. Functionally, catalyzes the NADPH-dependent formation of L-aspartate-semialdehyde (L-ASA) by the reductive dephosphorylation of L-aspartyl-4-phosphate. The sequence is that of Aspartate-semialdehyde dehydrogenase from Azotobacter vinelandii.